The following is a 559-amino-acid chain: Potassium-transporting ATPase potassium-binding subunit (559 aa).

12 consecutive transmembrane segments (helical) span residues 7–27, 63–83, 132–152, 170–190, 253–273, 283–303, 327–347, 356–376, 379–399, 416–436, 484–504, and 524–544; these read LLIA…GSGL, LLAL…LLFW, GLTV…FALI, LVRI…LFFI, MVQM…FGEA, LLWA…WAEV, FGVL…CGAV, ALGG…FGGV, GLYG…LMIG, MTAL…ALAM, LLAF…MAIA, and GALF…LTFI.

The protein belongs to the KdpA family. In terms of assembly, the system is composed of three essential subunits: KdpA, KdpB and KdpC.

Its subcellular location is the cell inner membrane. Its function is as follows. Part of the high-affinity ATP-driven potassium transport (or Kdp) system, which catalyzes the hydrolysis of ATP coupled with the electrogenic transport of potassium into the cytoplasm. This subunit binds the periplasmic potassium ions and delivers the ions to the membrane domain of KdpB through an intramembrane tunnel. This chain is Potassium-transporting ATPase potassium-binding subunit, found in Salmonella arizonae (strain ATCC BAA-731 / CDC346-86 / RSK2980).